A 451-amino-acid chain; its full sequence is Phosphoglucosamine mutase (451 aa).

The active-site Phosphoserine intermediate is Ser103. Mg(2+) contacts are provided by Ser103, Asp243, Asp245, and Asp247. Ser103 carries the post-translational modification Phosphoserine.

This sequence belongs to the phosphohexose mutase family. It depends on Mg(2+) as a cofactor. In terms of processing, activated by phosphorylation.

The enzyme catalyses alpha-D-glucosamine 1-phosphate = D-glucosamine 6-phosphate. In terms of biological role, catalyzes the conversion of glucosamine-6-phosphate to glucosamine-1-phosphate. This Lactiplantibacillus plantarum (strain ATCC BAA-793 / NCIMB 8826 / WCFS1) (Lactobacillus plantarum) protein is Phosphoglucosamine mutase.